A 359-amino-acid chain; its full sequence is F-box/kelch-repeat protein At1g15670 (359 aa).

The F-box domain occupies 2-49 (ELIPDLPETVAYECLLRSSYKQFPLMASVCKLWQREISLSDFFRHRKA). Kelch repeat units lie at residues 119–167 (DLVV…ASDS), 170–217 (NVFV…FHAG), 219–269 (FHVI…CAAG), 271–310 (NGDLYACCRRDLMMMKDDTWYKVGNLPADVCNVSYVAIRR), and 313–358 (NLVV…CFLE).

This Arabidopsis thaliana (Mouse-ear cress) protein is F-box/kelch-repeat protein At1g15670.